A 145-amino-acid polypeptide reads, in one-letter code: Basic phospholipase A2 Vb-2 (145 aa).

Positions 1–19 (MNPAHLLVLLAVCVSLLGA) are cleaved as a signal peptide. The propeptide occupies 20–27 (ANIPPQPL). Disulfide bonds link cysteine 38-cysteine 97, cysteine 52-cysteine 144, cysteine 54-cysteine 70, cysteine 69-cysteine 125, cysteine 76-cysteine 118, cysteine 86-cysteine 111, and cysteine 104-cysteine 116. Residues tyrosine 53, glycine 55, and glycine 57 each contribute to the Ca(2+) site. Residue histidine 73 is part of the active site. Aspartate 74 is a binding site for Ca(2+). Residue aspartate 119 is part of the active site.

The cofactor is Ca(2+). In terms of tissue distribution, expressed by the venom gland.

The protein resides in the secreted. It carries out the reaction a 1,2-diacyl-sn-glycero-3-phosphocholine + H2O = a 1-acyl-sn-glycero-3-phosphocholine + a fatty acid + H(+). Functionally, snake venom phospholipase A2 (PLA2) that has only a weak enzymatic activity. Inhibits neuromuscular transmission by blocking acetylcholine release from the nerve termini. PLA2 catalyzes the calcium-dependent hydrolysis of the 2-acyl groups in 3-sn-phosphoglycerides. The protein is Basic phospholipase A2 Vb-2 of Bungarus fasciatus (Banded krait).